We begin with the raw amino-acid sequence, 275 residues long: Large ribosomal subunit protein uL2 (275 aa).

Positions 223 to 275 are disordered; the sequence is VAMNPVDHPHGGGEGRTSGGRHPVSPWGQPTKGYKTRSNKRTDKYIVRRRNKK.

This sequence belongs to the universal ribosomal protein uL2 family. Part of the 50S ribosomal subunit. Forms a bridge to the 30S subunit in the 70S ribosome.

Functionally, one of the primary rRNA binding proteins. Required for association of the 30S and 50S subunits to form the 70S ribosome, for tRNA binding and peptide bond formation. It has been suggested to have peptidyltransferase activity; this is somewhat controversial. Makes several contacts with the 16S rRNA in the 70S ribosome. The sequence is that of Large ribosomal subunit protein uL2 from Shewanella pealeana (strain ATCC 700345 / ANG-SQ1).